The following is a 254-amino-acid chain: MSAAFTVVIPARYASTRLPGKPLQDIAGKPMVQHVWEQAKKSSASRVVVATDDARIVEACKVFGAEVLLTREDHNSGTDRLAEVATQLGLPADAIVVNVQGDEPLVPPSIIDQVAANLATNPQAGIATLAEPIEDVTALFNPNVVKVVADKSGLALTFSRAPLAWARDAFAKSRDVLPAGVPYRRHIGIYAYRAGFLHDFVAWGPCWLEDTECLEQLRALYNGVRIHVADALEAPAAGVDTAEDLERVRRLLGA.

It belongs to the KdsB family.

The protein resides in the cytoplasm. The enzyme catalyses 3-deoxy-alpha-D-manno-oct-2-ulosonate + CTP = CMP-3-deoxy-beta-D-manno-octulosonate + diphosphate. It functions in the pathway nucleotide-sugar biosynthesis; CMP-3-deoxy-D-manno-octulosonate biosynthesis; CMP-3-deoxy-D-manno-octulosonate from 3-deoxy-D-manno-octulosonate and CTP: step 1/1. The protein operates within bacterial outer membrane biogenesis; lipopolysaccharide biosynthesis. Activates KDO (a required 8-carbon sugar) for incorporation into bacterial lipopolysaccharide in Gram-negative bacteria. The sequence is that of 3-deoxy-manno-octulosonate cytidylyltransferase from Ectopseudomonas mendocina (strain ymp) (Pseudomonas mendocina).